Here is a 578-residue protein sequence, read N- to C-terminus: Putative diflavin flavoprotein A 2 (578 aa).

Residues 39–233 (QQGTTSNSYL…PPPRLYAPAH (195 aa)) form a zinc metallo-hydrolase region. The Flavodoxin-like domain occupies 262-404 (VALFYASAYG…AANEFAQALK (143 aa)). Residues 429–578 (VNRVVGSLCV…TAIQHRKTSS (150 aa)) form a flavodoxin-reductase-like region.

The protein in the N-terminal section; belongs to the zinc metallo-hydrolase group 3 family. This sequence in the C-terminal section; belongs to the flavodoxin reductase family. Requires Fe cation as cofactor.

Functionally, mediates electron transfer from NADH to oxygen, reducing it to water. This modular protein has 3 redox cofactors, in other organisms the same activity requires 2 or 3 proteins. This is Putative diflavin flavoprotein A 2 (dfa2) from Thermosynechococcus vestitus (strain NIES-2133 / IAM M-273 / BP-1).